The sequence spans 316 residues: MSFASETKKELTNLEVKDCCAKAELSALIRMNGSLSFSNRHLVLDVQTENAAIARRIYTLLKKQYDVSVELLVRKKMRLKKNNVYIVRFSENAKLILEELKILGENFVFERNISEELVAKRCCKRSYMRGAFLAGGSVNNPETSSYHLEIFSLYKEHNDSLCALLNEFHLNSKTLERKKGYITYLKEAEKITEFLNVIGAHNSLLRFEDVRIVRDMRNSVNRLVNCETANLNKTIGASLRQVENIKYIDERIGLEALPEKLREIAQLRIDYQEVTLKELGEMVASGKISKSGINHRLRKLDEIAEQLRTGQSITLK.

Positions Thr275–Thr309 form a DNA-binding region, H-T-H motif.

Belongs to the WhiA family.

Functionally, involved in cell division and chromosome segregation. The sequence is that of Probable cell division protein WhiA from Bacillus velezensis (strain DSM 23117 / BGSC 10A6 / LMG 26770 / FZB42) (Bacillus amyloliquefaciens subsp. plantarum).